The primary structure comprises 111 residues: UPF0060 membrane protein Ajs_1473 (111 aa).

The next 4 helical transmembrane spans lie at 8–28, 33–53, 65–85, and 88–108; these read ILFA…WLVV, SAWL…LLTL, YGGM…GVAL, and WDFV…LQPA.

The protein belongs to the UPF0060 family.

The protein localises to the cell inner membrane. This is UPF0060 membrane protein Ajs_1473 from Acidovorax sp. (strain JS42).